Consider the following 406-residue polypeptide: 12S rRNA N(4)-cytidine methyltransferase METTL15 (406 aa).

The transit peptide at methionine 1–glycine 22 directs the protein to the mitochondrion. S-adenosyl-L-methionine contacts are provided by residues glycine 100–histidine 102, aspartate 119, phenylalanine 146, aspartate 169, and glutamine 176. Serine 358 is subject to Phosphoserine.

This sequence belongs to the methyltransferase superfamily. RsmH family.

Its subcellular location is the mitochondrion matrix. It catalyses the reaction cytidine(839) in 12S rRNA + S-adenosyl-L-methionine = N(4)-methylcytidine(839) in 12S rRNA + S-adenosyl-L-homocysteine + H(+). N4-methylcytidine (m4C) methyltransferase responsible for the methylation of position C839 in mitochondrial 12S rRNA. Involved in the stabilization of 12S rRNA folding, therefore facilitating the assembly of the mitochondrial small ribosomal subunits. This is 12S rRNA N(4)-cytidine methyltransferase METTL15 from Mus musculus (Mouse).